A 322-amino-acid chain; its full sequence is Dirigent protein 9 (322 aa).

The N-terminal stretch at methionine 1 to alanine 20 is a signal peptide.

The protein belongs to the plant dirigent protein family. In terms of assembly, homodimer.

The protein resides in the secreted. It localises to the extracellular space. Its subcellular location is the apoplast. In terms of biological role, dirigent proteins impart stereoselectivity on the phenoxy radical-coupling reaction, yielding optically active lignans from two molecules of coniferyl alcohol in the biosynthesis of lignans, flavonolignans, and alkaloids and thus plays a central role in plant secondary metabolism. The chain is Dirigent protein 9 (DIR9) from Arabidopsis thaliana (Mouse-ear cress).